Reading from the N-terminus, the 160-residue chain is SsrA-binding protein (160 aa).

This sequence belongs to the SmpB family.

It is found in the cytoplasm. Required for rescue of stalled ribosomes mediated by trans-translation. Binds to transfer-messenger RNA (tmRNA), required for stable association of tmRNA with ribosomes. tmRNA and SmpB together mimic tRNA shape, replacing the anticodon stem-loop with SmpB. tmRNA is encoded by the ssrA gene; the 2 termini fold to resemble tRNA(Ala) and it encodes a 'tag peptide', a short internal open reading frame. During trans-translation Ala-aminoacylated tmRNA acts like a tRNA, entering the A-site of stalled ribosomes, displacing the stalled mRNA. The ribosome then switches to translate the ORF on the tmRNA; the nascent peptide is terminated with the 'tag peptide' encoded by the tmRNA and targeted for degradation. The ribosome is freed to recommence translation, which seems to be the essential function of trans-translation. In Rhodospirillum rubrum (strain ATCC 11170 / ATH 1.1.1 / DSM 467 / LMG 4362 / NCIMB 8255 / S1), this protein is SsrA-binding protein.